Here is a 222-residue protein sequence, read N- to C-terminus: Small ribosomal subunit protein eS1 (222 aa).

The protein belongs to the eukaryotic ribosomal protein eS1 family.

The chain is Small ribosomal subunit protein eS1 from Pyrobaculum neutrophilum (strain DSM 2338 / JCM 9278 / NBRC 100436 / V24Sta) (Thermoproteus neutrophilus).